The chain runs to 147 residues: Hemoglobin subunit epsilon (147 aa).

Residues 3–147 (HFTAEEKSTI…VATALAHKYH (145 aa)) form the Globin domain. Phosphoserine occurs at positions 14 and 51. His64 and His93 together coordinate heme b.

It belongs to the globin family. Heterotetramer of two alpha chains and two epsilon chains in early embryonic hemoglobin Gower-2; two zeta chains and two epsilon chains in early embryonic hemoglobin Gower-1. As to expression, red blood cells.

In terms of biological role, the epsilon chain is a beta-type chain of early mammalian embryonic hemoglobin. This is Hemoglobin subunit epsilon (HBE1) from Propithecus verreauxi (White sifaka).